The sequence spans 332 residues: RNA polymerase principal sigma factor HrdD (332 aa).

Positions 1–11 (MATRAVARRKS) are enriched in basic residues. Residues 1–25 (MATRAVARRKSAAGETSGSATSVRA) are disordered. The segment covering 13 to 22 (AGETSGSATS) has biased composition (low complexity). Residues 124–137 (DLIQEGNAGLVRAV) carry the Polymerase core binding motif. A DNA-binding region (H-T-H motif) is located at residues 294–313 (LTEVGKEHGLTRERIRQIEK).

The protein belongs to the sigma-70 factor family. Interacts transiently with the RNA polymerase catalytic core.

In terms of biological role, sigma factors are initiation factors that promote the attachment of RNA polymerase to specific initiation sites and are then released. The sequence is that of RNA polymerase principal sigma factor HrdD (hrdD) from Streptomyces coelicolor (strain ATCC BAA-471 / A3(2) / M145).